The chain runs to 714 residues: MSVNDQITHIGKTLSTTASAFLNYQKSNSNTQDVLTNNGPYKNLLSNTVNNASSTSYFYKRTEHGRFVKNASNTFEDIYSKTRRGDVFRNKFTDNKTCFRMLTYISDDLLNEIPTKEGLKSDADGKLLTEGGENENLRKNASKKETSLFQGFKSYLPIAELAIENTERLNYDTNGTSGTVGAKDVMSKTNERDEIHTELPNFQDSFLIPPGVETKKISSSYSPSALKSFSQTLVNSLEFLNIQKNSTLSEIRDIEVEVENLRQKKEKLLGKIANIEQNQLLLEDNLKQIDDRLDFLEEYGLEVIEANSDENAEDDGMSERKALKNDAIRNEGVTTESISSEASNLPPRRRQQLRDDNSLNRLGAFYSKSKKRHRKSFPTFQQLYEPGTKIGSIMSTHDDFLTCLDFDAPFGTLCTAGYLDHTVKIWDLSKQNKIGELAGHLATINCMQINRDYGTLVTGGRDAALKLWNLNLAQQLYQETQNLTSPTNHIDSPCVHTFEAHTDEVTALSLDPSFLVSGSQDRTIRQWDLRSGKCLQTIDLSFANVLTTSTNVDLSKSTLLTQRNERPSIGALQSFDAALATGTKDGVVRLWDLRSGKVIRTLKGHTDAITSLKFDSACLVTGSYDRTVRIWDLRTGLLNKFHAYSAPVLSLDLFQENAAVVVADEPSVQIYDSEKDESWSCVEQGNETSVSTVKYKENYMVEGRENGDVNIWAV.

Residues 240 to 298 adopt a coiled-coil conformation; it reads LNIQKNSTLSEIRDIEVEVENLRQKKEKLLGKIANIEQNQLLLEDNLKQIDDRLDFLEE. The tract at residues 323–354 is disordered; that stretch reads LKNDAIRNEGVTTESISSEASNLPPRRRQQLR. Polar residues predominate over residues 332-343; that stretch reads GVTTESISSEAS. Serine 376 is subject to Phosphoserine. WD repeat units follow at residues 396–436, 439–478, 500–539, 561–603, 604–642, 644–681, and 685–714; these read THDD…KIGE, GHLA…QLYQ, AHTD…QTID, TQRN…RTLK, GHTD…NKFH, YSAP…SWSC, and GNET…IWAV.

The protein belongs to the WD repeat MDV1/CAF4 family. As to quaternary structure, interacts with CAF4, DNM1 and FIS1, components of the mitochondrial fission machinery. Interacts via its N-terminal, coiled-coil extension (NTE) with FIS1, and via its WD repeats with DNM1.

The protein localises to the mitochondrion outer membrane. In terms of biological role, involved in mitochondrial fission. Has a partially redundant function to CAF4 in acting as an adapter protein, binding to FIS1 on the mitochondrial outer membrane and recruiting the dynamin-like GTPase DNM1 to form mitochondrial fission complexes. Formation of these complexes is required to promote constriction and fission of the mitochondrial compartment at a late step in mitochondrial division. In Saccharomyces cerevisiae (strain ATCC 204508 / S288c) (Baker's yeast), this protein is Mitochondrial division protein 1 (MDV1).